The following is a 482-amino-acid chain: UDP-N-acetylmuramate--L-alanine ligase (482 aa).

Position 129–135 (129–135) interacts with ATP; sequence GTHGKTT.

This sequence belongs to the MurCDEF family.

Its subcellular location is the cytoplasm. The enzyme catalyses UDP-N-acetyl-alpha-D-muramate + L-alanine + ATP = UDP-N-acetyl-alpha-D-muramoyl-L-alanine + ADP + phosphate + H(+). Its pathway is cell wall biogenesis; peptidoglycan biosynthesis. Its function is as follows. Cell wall formation. The chain is UDP-N-acetylmuramate--L-alanine ligase from Acinetobacter baumannii (strain SDF).